Consider the following 345-residue polypeptide: GTP cyclohydrolase-2 (345 aa).

The interval 1 to 27 (MTIDNYDNSKQDSSKYEVSGTGDGRNG) is disordered. 143–147 (RIHSE) serves as a coordination point for GTP. Zn(2+) contacts are provided by Cys-148, Cys-159, and Cys-161. Residues Gln-164, 197–199 (EGR), and Thr-219 each bind GTP. Asp-231 acts as the Proton acceptor in catalysis. The Nucleophile role is filled by Arg-233. 2 residues coordinate GTP: Thr-254 and Lys-259. The disordered stretch occupies residues 312–345 (PLKLHTNPQPTETSEAQNQNRMNSALSSTSTLAI). Residues 317-345 (TNPQPTETSEAQNQNRMNSALSSTSTLAI) show a composition bias toward polar residues.

Belongs to the GTP cyclohydrolase II family. Zn(2+) is required as a cofactor.

It carries out the reaction GTP + 4 H2O = 2,5-diamino-6-hydroxy-4-(5-phosphoribosylamino)-pyrimidine + formate + 2 phosphate + 3 H(+). The protein operates within cofactor biosynthesis; riboflavin biosynthesis; 5-amino-6-(D-ribitylamino)uracil from GTP: step 1/4. Functionally, catalyzes the conversion of GTP to 2,5-diamino-6-ribosylamino-4(3H)-pyrimidinone 5'-phosphate (DARP), formate and pyrophosphate. This is GTP cyclohydrolase-2 (RIB1) from Saccharomyces cerevisiae (strain ATCC 204508 / S288c) (Baker's yeast).